Consider the following 304-residue polypeptide: MELIEEIINLDEAIQGETRTEIIYTKSQTPSNIKIIVIAGNPGIESFYQEFVKVLNLSFNSKYDIYGVGHIGHCGKIENKTFSVEEQIKHKELFLEYLLKNKYGDKDRKDIKFILIGHSVGSYISLKVVSRFSEKFEFLSVVNLFPTFKNLYDGLSPFIKMVVMRESTRNGLSTFLHYIPSIVVSNVLKWILPSDESRIAVQSKINYYSALNILYMAYTETEDIKEIDDECHSVFNSRLNQLLFIYGQTDSYTPKSFYDEMKQLYPAGNIEYSSSYVPHAFVLHHSQEVALRVSEWLSLNILKN.

The active-site Nucleophile is Ser-119. Catalysis depends on charge relay system residues Asp-250 and His-279.

The protein belongs to the AB hydrolase superfamily. LDAH family.

It is found in the lipid droplet. The catalysed reaction is a cholesterol ester + H2O = cholesterol + a fatty acid + H(+). Probable serine lipid hydrolase associated with lipid droplets. Has low cholesterol esterase activity. Appears to lack triglyceride lipase activity. Involved in cholesterol and triglyceride homeostasis; stimulates cellular triglyceride accumulation and cellular cholesterol release. The chain is Lipid droplet-associated hydrolase from Dictyostelium discoideum (Social amoeba).